The chain runs to 231 residues: 5'-methylthioadenosine/S-adenosylhomocysteine nucleosidase (231 aa).

Residue Glu-12 is the Proton acceptor of the active site. Substrate contacts are provided by residues Gly-78, Val-153, and Met-174–Glu-175. Asp-198 acts as the Proton donor in catalysis.

Belongs to the PNP/UDP phosphorylase family. MtnN subfamily.

The enzyme catalyses S-adenosyl-L-homocysteine + H2O = S-(5-deoxy-D-ribos-5-yl)-L-homocysteine + adenine. It catalyses the reaction S-methyl-5'-thioadenosine + H2O = 5-(methylsulfanyl)-D-ribose + adenine. It carries out the reaction 5'-deoxyadenosine + H2O = 5-deoxy-D-ribose + adenine. Its pathway is amino-acid biosynthesis; L-methionine biosynthesis via salvage pathway; S-methyl-5-thio-alpha-D-ribose 1-phosphate from S-methyl-5'-thioadenosine (hydrolase route): step 1/2. Catalyzes the irreversible cleavage of the glycosidic bond in both 5'-methylthioadenosine (MTA) and S-adenosylhomocysteine (SAH/AdoHcy) to adenine and the corresponding thioribose, 5'-methylthioribose and S-ribosylhomocysteine, respectively. Also cleaves 5'-deoxyadenosine, a toxic by-product of radical S-adenosylmethionine (SAM) enzymes, into 5-deoxyribose and adenine. The chain is 5'-methylthioadenosine/S-adenosylhomocysteine nucleosidase from Aliivibrio fischeri (Vibrio fischeri).